The primary structure comprises 340 residues: MVRKGDKKLAKPPTTKAANSQPRRRATQRRRSGRADAPLAKASTITGFGRATNDVHISGMSRIAQAVVPAGTGTDGKIVVDSTIVPELLPRLGHAARIFQRYAVETLEFEIQPMCPANTGGGYVAGFLPDPTDNDHTFDALQATRGAVVAKWWESRTVRPQYTRTLLWTSTGKEQRLTSPGRLVLLCVGSNTDVVNVSVMCRWSVRLSVPSLETPEDTTAPITTQAPLHNDSINNGYTGFRSILLGATQLDLAPANAVFVTDKPLPIDYNLGVGDVDRAVYWHLRKKAGDTQVPAGYFDWGLWDDFNKTFTVGAPYYSDQQPRQILLPAGTLFTRVDSEN.

The disordered stretch occupies residues M1–L39. Residues P22–S32 are compositionally biased toward basic residues.

The protein belongs to the peptidase A6 family.

The protein resides in the virion. Its function is as follows. Capsid protein alpha self-assembles to form an icosahedral procapsid with a T=3 symmetry, about 30 nm in diameter, and consisting of 60 capsid proteins trimers. The capsid encapsulates the two genomic RNAs. The sequence is that of Capsid protein alpha (alpha) from Striped jack nervous necrosis virus (SjNNV).